We begin with the raw amino-acid sequence, 227 residues long: MAIKDWHEDDRPREKLLKFGAAHLSDAEILAIFLRTGTQSQSAIELARHLIEQFGSLAELLAAPQETVLACHGIGPAKYAQILASLEMGRRYLDSQLKTGQGLGRSQMVKDYISTQLRGEPREVFAVLCLDNALNLINFEILFTGGISSCSVCIKHVLRHALSHAASQLIIAHNHPHTDAKPSTADNLLTYELKKACDLIDLSLIDHVIVGRNETLSYAENSLPPFN.

The region spanning 102 to 224 (GLGRSQMVKD…TLSYAENSLP (123 aa)) is the MPN domain. His-173, His-175, and Asp-186 together coordinate Zn(2+). The JAMM motif motif lies at 173-186 (HNHPHTDAKPSTAD).

The protein belongs to the UPF0758 family.

The protein is UPF0758 protein Pcryo_2119 of Psychrobacter cryohalolentis (strain ATCC BAA-1226 / DSM 17306 / VKM B-2378 / K5).